A 141-amino-acid chain; its full sequence is Nucleoside diphosphate kinase (141 aa).

Positions 11, 59, 87, 93, 104, and 114 each coordinate ATP. The Pros-phosphohistidine intermediate role is filled by His117.

The protein belongs to the NDK family. As to quaternary structure, homotetramer. The cofactor is Mg(2+).

Its subcellular location is the cytoplasm. It carries out the reaction a 2'-deoxyribonucleoside 5'-diphosphate + ATP = a 2'-deoxyribonucleoside 5'-triphosphate + ADP. It catalyses the reaction a ribonucleoside 5'-diphosphate + ATP = a ribonucleoside 5'-triphosphate + ADP. Its function is as follows. Major role in the synthesis of nucleoside triphosphates other than ATP. The ATP gamma phosphate is transferred to the NDP beta phosphate via a ping-pong mechanism, using a phosphorylated active-site intermediate. The chain is Nucleoside diphosphate kinase from Paraburkholderia phytofirmans (strain DSM 17436 / LMG 22146 / PsJN) (Burkholderia phytofirmans).